A 122-amino-acid chain; its full sequence is MPPKPSGKGQKKAGKAKGAPRTDKKRRRKRKESYGIYIYKVMKQVHPDTGISSRAMSIMNSFVNDIFERIAAEASRLAHYNKKSTITSREVQTAVRLLLPGELAKHAVSEGTKAVTKYTTSK.

The segment at 1-31 (MPPKPSGKGQKKAGKAKGAPRTDKKRRRKRK) is disordered. Proline 2 is subject to N,N-dimethylproline. O-linked (GlcNAc) serine glycosylation is present at serine 109. Residue lysine 117 forms a Glycyl lysine isopeptide (Lys-Gly) (interchain with G-Cter in ubiquitin) linkage.

The protein belongs to the histone H2B family. In terms of assembly, the nucleosome is a histone octamer containing two molecules each of H2A, H2B, H3 and H4 assembled in one H3-H4 heterotetramer and two H2A-H2B heterodimers. The octamer wraps approximately 147 bp of DNA. In terms of processing, monoubiquitination of Lys-117 gives a specific tag for epigenetic transcriptional activation and is also prerequisite for histone H3 'Lys-4' and 'Lys-79' methylation. Post-translationally, glcNAcylation at Ser-109 promotes monoubiquitination of Lys-117. It fluctuates in response to extracellular glucose, and associates with transcribed genes.

The protein localises to the nucleus. It localises to the chromosome. Core component of nucleosome. Nucleosomes wrap and compact DNA into chromatin, limiting DNA accessibility to the cellular machineries which require DNA as a template. Histones thereby play a central role in transcription regulation, DNA repair, DNA replication and chromosomal stability. DNA accessibility is regulated via a complex set of post-translational modifications of histones, also called histone code, and nucleosome remodeling. The protein is Histone H2B, gonadal of Asterias rubens (Common European starfish).